A 306-amino-acid polypeptide reads, in one-letter code: Curved DNA-binding protein (306 aa).

In terms of domain architecture, J spans 5–69; sequence DYYAIMGVKP…QRRAEYDQMW (65 aa).

The protein resides in the cytoplasm. It is found in the nucleoid. In terms of biological role, DNA-binding protein that preferentially recognizes a curved DNA sequence. It is probably a functional analog of DnaJ; displays overlapping activities with DnaJ, but functions under different conditions, probably acting as a molecular chaperone in an adaptive response to environmental stresses other than heat shock. Lacks autonomous chaperone activity; binds native substrates and targets them for recognition by DnaK. Its activity is inhibited by the binding of CbpM. This is Curved DNA-binding protein from Shigella flexneri.